Here is a 359-residue protein sequence, read N- to C-terminus: Ornithine cyclodeaminase (359 aa).

L-ornithine contacts are provided by Arg-53 and Lys-77. NAD(+)-binding positions include Thr-92, Arg-120, 147-148 (AQ), Asp-169, Thr-209, 232-235 (VGGD), Lys-239, and Ser-300. Arg-120 serves as a coordination point for L-ornithine. Asp-235 contributes to the L-ornithine binding site. Asp-235 functions as the Proton donor/acceptor in the catalytic mechanism. Residue Val-301 coordinates L-ornithine.

It belongs to the ornithine cyclodeaminase/mu-crystallin family. Requires NAD(+) as cofactor.

The catalysed reaction is L-ornithine = L-proline + NH4(+). It functions in the pathway amino-acid biosynthesis; L-proline biosynthesis; L-proline from L-ornithine: step 1/1. Functionally, catalyzes the conversion of L-ornithine into L-proline with release of ammonia. This chain is Ornithine cyclodeaminase, found in Brucella melitensis biotype 1 (strain ATCC 23456 / CCUG 17765 / NCTC 10094 / 16M).